A 259-amino-acid chain; its full sequence is Ubiquinone/menaquinone biosynthesis C-methyltransferase UbiE (259 aa).

Residues threonine 82, aspartate 103, 131-132, and serine 148 contribute to the S-adenosyl-L-methionine site; that span reads NA.

This sequence belongs to the class I-like SAM-binding methyltransferase superfamily. MenG/UbiE family.

The catalysed reaction is a 2-demethylmenaquinol + S-adenosyl-L-methionine = a menaquinol + S-adenosyl-L-homocysteine + H(+). The enzyme catalyses a 2-methoxy-6-(all-trans-polyprenyl)benzene-1,4-diol + S-adenosyl-L-methionine = a 5-methoxy-2-methyl-3-(all-trans-polyprenyl)benzene-1,4-diol + S-adenosyl-L-homocysteine + H(+). It participates in quinol/quinone metabolism; menaquinone biosynthesis; menaquinol from 1,4-dihydroxy-2-naphthoate: step 2/2. The protein operates within cofactor biosynthesis; ubiquinone biosynthesis. Its function is as follows. Methyltransferase required for the conversion of demethylmenaquinol (DMKH2) to menaquinol (MKH2) and the conversion of 2-polyprenyl-6-methoxy-1,4-benzoquinol (DDMQH2) to 2-polyprenyl-3-methyl-6-methoxy-1,4-benzoquinol (DMQH2). The protein is Ubiquinone/menaquinone biosynthesis C-methyltransferase UbiE of Vibrio parahaemolyticus serotype O3:K6 (strain RIMD 2210633).